The following is a 722-amino-acid chain: Host cell factor 2 (722 aa).

Kelch repeat units follow at residues 34-79 (LMII…GFVC), 83-130 (RILV…RLGH), 207-255 (KMYV…VIGN), and 257-303 (MYIF…VSDS). Fibronectin type-III domains are found at residues 359-460 (APSQ…VDSS), 514-604 (TPSN…TCTP), and 606-716 (FPGA…DQEK). Residues 398 to 476 (ATSSDSSAAP…LAPNTSNNSS (79 aa)) are disordered. Over residues 419–436 (QGSNSTLHNSVSDTVNST) the composition is skewed to polar residues.

As to quaternary structure, binds KMT2A/MLL1. Component of the MLL1/MLL complex, at least composed of KMT2A/MLL1, ASH2L, RBBP5, DPY30, WDR5, MEN1, HCFC1 and HCFC2. Interacts with TASOR. Expressed in the spermatogonia, spermatocytes and ovary.

It localises to the cytoplasm. The protein resides in the nucleus. The polypeptide is Host cell factor 2 (Hcfc2) (Mus musculus (Mouse)).